A 193-amino-acid chain; its full sequence is MNFLAHLHLAHLAESSLSGNLLADFVRGNPEESFPPDVVAGIHMHRRIDVLTDNLPEVREAREWFRSETRRVAPITLDVMWDHFLSRHWSQLSPDFPLQEFVCYAREQVMTILPDSPPRFINLNNYLWSEQWLVRYRDMDFIQNVLNGMASRRPRLDALRDSWYDLDAHYAALETRFWQFYPRMMAQASRKAL.

Belongs to the AcpH family.

It carries out the reaction holo-[ACP] + H2O = apo-[ACP] + (R)-4'-phosphopantetheine + H(+). In terms of biological role, converts holo-ACP to apo-ACP by hydrolytic cleavage of the phosphopantetheine prosthetic group from ACP. The chain is Acyl carrier protein phosphodiesterase from Escherichia coli O157:H7.